Here is an 84-residue protein sequence, read N- to C-terminus: uncharacterized protein (84 aa).

Composition is skewed to basic residues over residues 1-15 and 67-84; these read MPPH…HGHH and HHGH…GHFF. 2 disordered regions span residues 1–22 and 64–84; these read MPPH…TYTT and TSHH…GHFF.

This is an uncharacterized protein from Dictyostelium discoideum (Social amoeba).